Here is a 70-residue protein sequence, read N- to C-terminus: UPF0337 protein YjbJ (70 aa).

It belongs to the UPF0337 (CsbD) family.

The sequence is that of UPF0337 protein YjbJ (yjbJ) from Salmonella typhi.